The sequence spans 253 residues: Isoprenyl transferase (253 aa).

Residue aspartate 30 is part of the active site. Aspartate 30 contributes to the Mg(2+) binding site. Substrate contacts are provided by residues 31-34 (GNRR), tryptophan 35, histidine 51, and 79-81 (STE). Asparagine 82 serves as the catalytic Proton acceptor. Substrate contacts are provided by residues phenylalanine 83, arginine 85, arginine 202, and 208–210 (RVS). Glutamate 221 lines the Mg(2+) pocket.

Belongs to the UPP synthase family. In terms of assembly, homodimer. Requires Mg(2+) as cofactor.

Catalyzes the condensation of isopentenyl diphosphate (IPP) with allylic pyrophosphates generating different type of terpenoids. This chain is Isoprenyl transferase, found in Chlamydia trachomatis serovar D (strain ATCC VR-885 / DSM 19411 / UW-3/Cx).